We begin with the raw amino-acid sequence, 1062 residues long: SLIT-ROBO Rho GTPase-activating protein 1 (1062 aa).

The F-BAR domain maps to 19–314 (SQVKEIRAQL…AVDNLEPRSD (296 aa)). Residues 352–382 (QAELMLRNQQLQSRLATLKIESEEVKKTTEA) adopt a coiled-coil conformation. Residue serine 416 is modified to Phosphoserine. Residues 481–671 (GRRNSHARHQ…TIIIHHETIF (191 aa)) form the Rho-GAP domain. The 60-residue stretch at 720–779 (CEPIEAIAKFDYVGRSARELSFKKGASLLLYHRASEDWWEGRHNGIDGLVPHQYIVVQDM) folds into the SH3 domain. Residues 785-799 (DTLSQKADSEASSGP) show a composition bias toward polar residues. The interval 785-931 (DTLSQKADSE…TGFNDHKPLD (147 aa)) is disordered. Phosphoserine occurs at positions 812 and 894. The span at 899–908 (SRHDSLKKID) shows a compositional bias: basic and acidic residues. At serine 909 the chain carries Phosphoserine. Polar residues predominate over residues 914 to 923 (RSTSSGQYTG). A coiled-coil region spans residues 933 to 960 (ETIAQDIEETMNTALNELRELERQSTVK). Residues 974–988 (KNSPTPATSTESLSP) are compositionally biased toward polar residues. 2 disordered regions span residues 974 to 1013 (KNSPTPATSTESLSPLHNVALRGSEPQIRRSTSSSSETMS) and 1028 to 1062 (KPPALRPKPAVLPKTNPTMGPAAPSQGPTDKSCTM). The residue at position 976 (serine 976) is a Phosphoserine. Threonine 978 is modified (phosphothreonine). A compositionally biased stretch (low complexity) spans 1004 to 1013 (STSSSSETMS). Position 1009 is a phosphoserine (serine 1009). A compositionally biased stretch (polar residues) spans 1053-1062 (QGPTDKSCTM).

In terms of assembly, homodimer. Forms a heterooligomer with SRGAP2 and SRGAP3 through its F-BAR domain. Interacts with CDC42 and RHOA. Interacts with FASLG. Interacts (via SH3 domain) with ROBO1.

In terms of biological role, GTPase-activating protein for RhoA and Cdc42 small GTPases. Together with CDC42 seems to be involved in the pathway mediating the repulsive signaling of Robo and Slit proteins in neuronal migration. SLIT2, probably through interaction with ROBO1, increases the interaction of SRGAP1 with ROBO1 and inactivates CDC42. The chain is SLIT-ROBO Rho GTPase-activating protein 1 (Srgap1) from Mus musculus (Mouse).